We begin with the raw amino-acid sequence, 549 residues long: Glucose-6-phosphate isomerase 1 (549 aa).

The active-site Proton donor is Glu-358. Active-site residues include His-389 and Lys-513.

The protein belongs to the GPI family.

It is found in the cytoplasm. The catalysed reaction is alpha-D-glucose 6-phosphate = beta-D-fructose 6-phosphate. Its pathway is carbohydrate biosynthesis; gluconeogenesis. The protein operates within carbohydrate degradation; glycolysis; D-glyceraldehyde 3-phosphate and glycerone phosphate from D-glucose: step 2/4. In terms of biological role, catalyzes the reversible isomerization of glucose-6-phosphate to fructose-6-phosphate. In Streptomyces avermitilis (strain ATCC 31267 / DSM 46492 / JCM 5070 / NBRC 14893 / NCIMB 12804 / NRRL 8165 / MA-4680), this protein is Glucose-6-phosphate isomerase 1.